Here is a 277-residue protein sequence, read N- to C-terminus: Glycerol-3-phosphate acyltransferase (277 aa).

5 helical membrane-spanning segments follow: residues 3–23 (LFIF…AIIV), 55–75 (IMVM…AKFL), 79–99 (PVTV…PVFF), 111–131 (IGAL…TWLL), and 155–175 (LILV…ILVL). A disordered region spans residues 207–277 (SPATSAEQEF…PKTKTVKEKE (71 aa)). Residues 216–239 (FPGKEVIDTNIDETEKTEQAEAVK) show a composition bias toward basic and acidic residues. 2 stretches are compositionally biased toward basic residues: residues 240-253 (KPKV…AKKT) and 262-271 (KPKSTKPKTK).

This sequence belongs to the PlsY family. As to quaternary structure, probably interacts with PlsX.

Its subcellular location is the cell inner membrane. It carries out the reaction an acyl phosphate + sn-glycerol 3-phosphate = a 1-acyl-sn-glycero-3-phosphate + phosphate. It participates in lipid metabolism; phospholipid metabolism. Functionally, catalyzes the transfer of an acyl group from acyl-phosphate (acyl-PO(4)) to glycerol-3-phosphate (G3P) to form lysophosphatidic acid (LPA). This enzyme utilizes acyl-phosphate as fatty acyl donor, but not acyl-CoA or acyl-ACP. The polypeptide is Glycerol-3-phosphate acyltransferase (Legionella pneumophila subsp. pneumophila (strain Philadelphia 1 / ATCC 33152 / DSM 7513)).